An 89-amino-acid polypeptide reads, in one-letter code: Small ribosomal subunit protein uS15 (89 aa).

A compositionally biased stretch (basic and acidic residues) spans 1–10; the sequence is MPLNTEKKQE. Positions 1-22 are disordered; that stretch reads MPLNTEKKQELINSHQTHATDT. Polar residues predominate over residues 11-22; it reads LINSHQTHATDT.

Belongs to the universal ribosomal protein uS15 family. As to quaternary structure, part of the 30S ribosomal subunit. Forms a bridge to the 50S subunit in the 70S ribosome, contacting the 23S rRNA.

Its function is as follows. One of the primary rRNA binding proteins, it binds directly to 16S rRNA where it helps nucleate assembly of the platform of the 30S subunit by binding and bridging several RNA helices of the 16S rRNA. Functionally, forms an intersubunit bridge (bridge B4) with the 23S rRNA of the 50S subunit in the ribosome. This is Small ribosomal subunit protein uS15 from Synechococcus sp. (strain RCC307).